Consider the following 135-residue polypeptide: Probable 5-hydroxyisourate hydrolase R09H10.3 (135 aa).

A signal peptide spans 1–20 (MNKFSLFFALTATLMTITES). Residues His-30, Arg-68, and Tyr-132 each contribute to the substrate site.

It belongs to the transthyretin family. 5-hydroxyisourate hydrolase subfamily. In terms of assembly, homotetramer.

It catalyses the reaction 5-hydroxyisourate + H2O = 5-hydroxy-2-oxo-4-ureido-2,5-dihydro-1H-imidazole-5-carboxylate + H(+). Its function is as follows. Catalyzes the hydrolysis of 5-hydroxyisourate (HIU) to 2-oxo-4-hydroxy-4-carboxy-5-ureidoimidazoline (OHCU). The polypeptide is Probable 5-hydroxyisourate hydrolase R09H10.3 (Caenorhabditis elegans).